The chain runs to 581 residues: Meiotic PUF family protein 1 (581 aa).

The PUM-HD domain maps to 225–580 (FPNGTTEPFE…RIAALVEKSK (356 aa)). 8 Pumilio repeats span residues 291–326 (TILP…SFSY), 327–362 (FLKK…NLIE), 363–398 (ELIE…GIFD), 403–438 (KMQG…TCLD), 439–474 (EIIN…RILN), 475–510 (SLLK…RYVK), 518–554 (ELPT…LMAE), and 555–581 (HLKK…KSKS).

Functionally, RNA-binding protein essential for meiotic progression. In Schizosaccharomyces pombe (strain 972 / ATCC 24843) (Fission yeast), this protein is Meiotic PUF family protein 1 (mpf1).